The chain runs to 151 residues: HTH-type transcriptional regulator FL11 (151 aa).

One can recognise an HTH asnC-type domain in the interval 5 to 66; that stretch reads LDDIDKKIIE…VVNPEALGYN (62 aa). A DNA-binding region (H-T-H motif) is located at residues 24-43; the sequence is LREISKITGLAESTIHERIK. Residue 98-104 coordinates L-arginine; that stretch reads ETTGDYD. Residues Asn118, Asp122, and 133 to 135 contribute to the L-lysine site; that span reads THT. Residues Asp122 and 133–135 contribute to the L-arginine site; that span reads THT.

Homodimer. Binds DNA as a dimer and an octamer.

Its activity is regulated as follows. In the famine mode, FL11 forms dimers and acts as a repressor, leading to growth arrest. In the feast mode, in the presence of high concentrations of lysine or arginine, four dimers assemble into an octamer and cover the fl11 and lysine biosynthesis promoters. This leads to the inhibition of fl11 expression and lysine biosynthesis, decrease of the FL11 concentration in the cell, derepression of the target genes and activation of the metabolism. In terms of biological role, DNA-binding protein involved in the repression of transcription of a large number of genes, thereby arresting growth, in response to environmental changes. The polypeptide is HTH-type transcriptional regulator FL11 (Pyrococcus furiosus (strain ATCC 43587 / DSM 3638 / JCM 8422 / Vc1)).